Consider the following 162-residue polypeptide: Photosystem II extrinsic protein V (162 aa).

The signal sequence occupies residues 1-25; the sequence is MLKRCLWLVVTVLFAWQVFNGTAIA. Positions 62, 65, 66, and 117 each coordinate heme c.

Belongs to the cytochrome c family. PsbV subfamily. As to quaternary structure, PSII is composed of 1 copy each of membrane proteins PsbA, PsbB, PsbC, PsbD, PsbE, PsbF, PsbH, PsbI, PsbJ, PsbK, PsbL, PsbM, PsbT, PsbX, PsbY, PsbZ, Psb30/Ycf12, peripheral proteins PsbO, CyanoQ (PsbQ), PsbU, PsbV and a large number of cofactors. It forms dimeric complexes. It depends on heme c as a cofactor.

It localises to the cellular thylakoid membrane. Its function is as follows. One of the extrinsic, lumenal subunits of photosystem II (PSII). PSII is a light-driven water plastoquinone oxidoreductase, using light energy to abstract electrons from H(2)O, generating a proton gradient subsequently used for ATP formation. The extrinsic proteins stabilize the structure of photosystem II oxygen-evolving complex (OEC), the ion environment of oxygen evolution and protect the OEC against heat-induced inactivation. Low-potential cytochrome c that plays a role in the OEC of PSII. This is Photosystem II extrinsic protein V from Cyanothece sp. (strain PCC 7425 / ATCC 29141).